The primary structure comprises 261 residues: (R)-S-adenosyl-L-methionine hydrolase (261 aa).

Residues aspartate 12, aspartate 72, and asparagine 187 each contribute to the adenosine site. The (R)-S-adenosyl-L-methionine site is built by asparagine 187, serine 231, and valine 239. Valine 239 is a binding site for adenosine.

This sequence belongs to the SAM hydrolase / SAM-dependent halogenase family.

It carries out the reaction (R)-S-adenosyl-L-methionine + H2O = adenosine + L-methionine + H(+). Its function is as follows. Specifically hydrolyzes (R)-S-adenosyl-L-methionine ((R)-SAM), the inactive form of the ubiquitous cofactor SAM, into adenosine and L-methionine. Is stereoselective as it cannot use the active form of SAM, (S)-S-adenosyl-L-methionine, as substrate. Likely plays a role in preventing accumulation of (R)-S-adenosyl-L-methionine in cells; maintenance of (S)-S-denosyl-L-methionine homochirality is important for cellular health given that the (R)-form is largely inactive as a methyl donor and can function as an inhibitor of methyltransferases. In Salinispora tropica (strain ATCC BAA-916 / DSM 44818 / JCM 13857 / NBRC 105044 / CNB-440), this protein is (R)-S-adenosyl-L-methionine hydrolase.